Consider the following 637-residue polypeptide: 1-deoxy-D-xylulose-5-phosphate synthase (637 aa).

Thiamine diphosphate is bound by residues His71 and 112 to 114 (SHA). Position 144 (Asp144) interacts with Mg(2+). Thiamine diphosphate contacts are provided by residues 145–146 (GA), Asn173, Tyr284, and Glu365. Residue Asn173 coordinates Mg(2+).

The protein belongs to the transketolase family. DXPS subfamily. As to quaternary structure, homodimer. Mg(2+) is required as a cofactor. Thiamine diphosphate serves as cofactor.

It catalyses the reaction D-glyceraldehyde 3-phosphate + pyruvate + H(+) = 1-deoxy-D-xylulose 5-phosphate + CO2. The protein operates within metabolic intermediate biosynthesis; 1-deoxy-D-xylulose 5-phosphate biosynthesis; 1-deoxy-D-xylulose 5-phosphate from D-glyceraldehyde 3-phosphate and pyruvate: step 1/1. Its function is as follows. Catalyzes the acyloin condensation reaction between C atoms 2 and 3 of pyruvate and glyceraldehyde 3-phosphate to yield 1-deoxy-D-xylulose-5-phosphate (DXP). The polypeptide is 1-deoxy-D-xylulose-5-phosphate synthase (Mycobacterium ulcerans (strain Agy99)).